The following is a 508-amino-acid chain: Photosystem II CP47 reaction center protein (508 aa).

Transmembrane regions (helical) follow at residues 21 to 36 (SVHI…WAGS), 101 to 115 (IVFS…IWHW), 140 to 156 (GIHL…FGAF), 203 to 218 (IAAG…FHLS), 237 to 252 (VLSS…AFVV), and 457 to 472 (SFAL…HGAR).

This sequence belongs to the PsbB/PsbC family. PsbB subfamily. As to quaternary structure, PSII is composed of 1 copy each of membrane proteins PsbA, PsbB, PsbC, PsbD, PsbE, PsbF, PsbH, PsbI, PsbJ, PsbK, PsbL, PsbM, PsbT, PsbX, PsbY, PsbZ, Psb30/Ycf12, at least 3 peripheral proteins of the oxygen-evolving complex and a large number of cofactors. It forms dimeric complexes. Binds multiple chlorophylls. PSII binds additional chlorophylls, carotenoids and specific lipids. is required as a cofactor.

Its subcellular location is the plastid. It localises to the chloroplast thylakoid membrane. Functionally, one of the components of the core complex of photosystem II (PSII). It binds chlorophyll and helps catalyze the primary light-induced photochemical processes of PSII. PSII is a light-driven water:plastoquinone oxidoreductase, using light energy to abstract electrons from H(2)O, generating O(2) and a proton gradient subsequently used for ATP formation. The chain is Photosystem II CP47 reaction center protein from Phaseolus vulgaris (Kidney bean).